We begin with the raw amino-acid sequence, 292 residues long: Mycothiol acetyltransferase (292 aa).

N-acetyltransferase domains are found at residues 13–168 (ALDR…KWLQ) and 159–292 (KSVA…VYEK). Glutamate 40 provides a ligand contact to 1D-myo-inositol 2-(L-cysteinylamino)-2-deoxy-alpha-D-glucopyranoside. 77 to 79 (LAV) is an acetyl-CoA binding site. The 1D-myo-inositol 2-(L-cysteinylamino)-2-deoxy-alpha-D-glucopyranoside site is built by glutamate 179, lysine 218, and glutamate 226. Acetyl-CoA contacts are provided by residues 230–232 (VGL) and 237–243 (RGRGLGD). Tyrosine 264 lines the 1D-myo-inositol 2-(L-cysteinylamino)-2-deoxy-alpha-D-glucopyranoside pocket.

This sequence belongs to the acetyltransferase family. MshD subfamily. In terms of assembly, monomer.

The catalysed reaction is 1D-myo-inositol 2-(L-cysteinylamino)-2-deoxy-alpha-D-glucopyranoside + acetyl-CoA = mycothiol + CoA + H(+). Functionally, catalyzes the transfer of acetyl from acetyl-CoA to desacetylmycothiol (Cys-GlcN-Ins) to form mycothiol. The chain is Mycothiol acetyltransferase from Corynebacterium glutamicum (strain ATCC 13032 / DSM 20300 / JCM 1318 / BCRC 11384 / CCUG 27702 / LMG 3730 / NBRC 12168 / NCIMB 10025 / NRRL B-2784 / 534).